Here is a 101-residue protein sequence, read N- to C-terminus: Small ribosomal subunit protein bS18c (101 aa).

Over residues 1–19 (MNKSKRPFTKSKRSFRRRL) the composition is skewed to basic residues. Residues 1–23 (MNKSKRPFTKSKRSFRRRLPPIQ) are disordered.

The protein belongs to the bacterial ribosomal protein bS18 family. In terms of assembly, part of the 30S ribosomal subunit.

It localises to the plastid. It is found in the chloroplast. In Draba nemorosa (Woodland whitlowgrass), this protein is Small ribosomal subunit protein bS18c.